The following is a 393-amino-acid chain: Isocitrate dehydrogenase [NAD] subunit gamma, mitochondrial (393 aa).

A mitochondrion-targeting transit peptide spans 1–39 (MALKVATVAGSAAKAVLGPALLCRPWEVLGAHEVPSRNI). Residues Thr-120 and Asn-133 each coordinate citrate. Arg-136, Arg-167, and Asp-254 together coordinate substrate. Asp-254 contributes to the Mn(2+) binding site. ADP contacts are provided by Asn-312, Thr-313, and Asn-324.

Belongs to the isocitrate and isopropylmalate dehydrogenases family. In terms of assembly, heterooligomer of subunits alpha (IDH3A), beta (IDH3B), and gamma (IDH3G) in the apparent ratio of 2:1:1. The heterodimer containing one IDH3A and one IDH3B subunit and the heterodimer containing one IDH3A and one IDH3G subunit assemble into a heterotetramer (which contains two subunits of IDH3A, one of IDH3B and one of IDH3G) and further into the heterooctamer. Mg(2+) serves as cofactor. The cofactor is Mn(2+).

The protein localises to the mitochondrion. Its activity is regulated as follows. The heterotetramer and the heterodimer composed of IDH3A and IDH3G subunits can be allosterically activated by citrate (CIT) or/and ADP, and the two activators can act independently or synergistically. The heterodimer composed of IDH3A and IDH3B subunits cannot be allosterically regulated and the allosteric regulation of the heterotetramer is through the IDH3G subunit and not the IDH3B subunit. The IDH3G subunit contains the allosteric site which consists of a CIT-binding site and an ADP-binding site, and the binding of CIT and ADP causes conformational changes at the allosteric site which are transmitted to the active site in the catalytic subunit (IDH3A) through a cascade of conformational changes at the heterodimer interface, leading to stabilization of the isocitrate-binding at the active site and thus activation of the enzyme. ATP can activate the heterotetramer and the heterodimer composed of IDH3A and IDH3G subunits at low concentrations but inhibits their activities at high concentrations, whereas ATP exhibits only inhibitory effect on the heterodimer composed of IDH3A and IDH3B subunits. Its function is as follows. Regulatory subunit which plays a role in the allosteric regulation of the enzyme catalyzing the decarboxylation of isocitrate (ICT) into alpha-ketoglutarate. The heterodimer composed of the alpha (IDH3A) and beta (IDH3B) subunits and the heterodimer composed of the alpha (IDH3A) and gamma (IDH3G) subunits, have considerable basal activity but the full activity of the heterotetramer (containing two subunits of IDH3A, one of IDH3B and one of IDH3G) requires the assembly and cooperative function of both heterodimers. The sequence is that of Isocitrate dehydrogenase [NAD] subunit gamma, mitochondrial (IDH3G) from Homo sapiens (Human).